A 223-amino-acid chain; its full sequence is Deoxyribose-phosphate aldolase (223 aa).

The active-site Proton donor/acceptor is Asp-91. The active-site Schiff-base intermediate with acetaldehyde is the Lys-153. The Proton donor/acceptor role is filled by Lys-182.

The protein belongs to the DeoC/FbaB aldolase family. DeoC type 1 subfamily.

The protein resides in the cytoplasm. It carries out the reaction 2-deoxy-D-ribose 5-phosphate = D-glyceraldehyde 3-phosphate + acetaldehyde. It functions in the pathway carbohydrate degradation; 2-deoxy-D-ribose 1-phosphate degradation; D-glyceraldehyde 3-phosphate and acetaldehyde from 2-deoxy-alpha-D-ribose 1-phosphate: step 2/2. Its function is as follows. Catalyzes a reversible aldol reaction between acetaldehyde and D-glyceraldehyde 3-phosphate to generate 2-deoxy-D-ribose 5-phosphate. The protein is Deoxyribose-phosphate aldolase of Streptococcus pyogenes serotype M4 (strain MGAS10750).